Consider the following 246-residue polypeptide: Probable cytokinin riboside 5'-monophosphate phosphoribohydrolase LOGL5 (246 aa).

Residues 1 to 10 (MMMENSREQQ) are compositionally biased toward basic and acidic residues. The tract at residues 1–28 (MMMENSREQQPESSPANNNSKKKKKKKT) is disordered. Substrate-binding positions include E103, 121–122 (RK), 138–144 (GYGTLEE), and T150.

This sequence belongs to the LOG family. As to expression, expressed in roots and leaves.

The catalysed reaction is N(6)-(dimethylallyl)adenosine 5'-phosphate + H2O = N(6)-dimethylallyladenine + D-ribose 5-phosphate. The enzyme catalyses 9-ribosyl-trans-zeatin 5'-phosphate + H2O = trans-zeatin + D-ribose 5-phosphate. Cytokinin-activating enzyme working in the direct activation pathway. Phosphoribohydrolase that converts inactive cytokinin nucleotides to the biologically active free-base forms. The sequence is that of Probable cytokinin riboside 5'-monophosphate phosphoribohydrolase LOGL5 (LOGL5) from Oryza sativa subsp. japonica (Rice).